Here is a 35-residue protein sequence, read N- to C-terminus: Photosystem II reaction center protein Psb30 (35 aa).

The chain crosses the membrane as a helical span at residues 7-27 (LIANFGALALITLAGPAVIFI).

The protein belongs to the Psb30/Ycf12 family. PSII is composed of 1 copy each of membrane proteins PsbA, PsbB, PsbC, PsbD, PsbE, PsbF, PsbH, PsbI, PsbJ, PsbK, PsbL, PsbM, PsbT, PsbX, PsbY, PsbZ, Psb30/Ycf12, peripheral proteins PsbO, CyanoQ (PsbQ), PsbU, PsbV and a large number of cofactors. It forms dimeric complexes.

Its subcellular location is the cellular thylakoid membrane. In terms of biological role, a core subunit of photosystem II (PSII), probably helps stabilize the reaction center. This is Photosystem II reaction center protein Psb30 from Synechococcus sp. (strain CC9311).